The following is a 459-amino-acid chain: Protein phosphatase 1M (459 aa).

Residues 1 to 10 (MSAGWFRRRF) show a composition bias toward basic residues. Positions 1–64 (MSAGWFRRRF…SRPVRSPARG (64 aa)) are disordered. Over residues 14–27 (EPLPAPRPPGPHAS) the composition is skewed to pro residues. Residues 38 to 48 (RGSSSSPGAAD) are compositionally biased toward low complexity. Positions 125 and 126 each coordinate Mn(2+). In terms of domain architecture, PPM-type phosphatase spans 162–459 (MHLNGRCICP…HSQGQESSDH (298 aa)).

The protein belongs to the PP2C family. Requires Mg(2+) as cofactor. Mn(2+) serves as cofactor.

The protein localises to the nucleus. The enzyme catalyses O-phospho-L-seryl-[protein] + H2O = L-seryl-[protein] + phosphate. The catalysed reaction is O-phospho-L-threonyl-[protein] + H2O = L-threonyl-[protein] + phosphate. The polypeptide is Protein phosphatase 1M (PPM1M) (Homo sapiens (Human)).